Here is a 356-residue protein sequence, read N- to C-terminus: GTPase Obg (356 aa).

The 159-residue stretch at 1–159 folds into the Obg domain; that stretch reads MKFLDQAKVY…RWIWLRLKLI (159 aa). Residues 160–328 form the OBG-type G domain; sequence ADAGLVGLPN…ALYAIAQHLG (169 aa). Residues 166 to 173, 191 to 195, 213 to 216, 280 to 283, and 309 to 311 contribute to the GTP site; these read GLPNAGKS, FTTLH, DIPG, NKID, and SGV. Mg(2+) contacts are provided by Ser173 and Thr193. The tract at residues 333 to 356 is disordered; sequence DIPLPKPSNADEEDPDTDQPWSPV.

This sequence belongs to the TRAFAC class OBG-HflX-like GTPase superfamily. OBG GTPase family. As to quaternary structure, monomer. Requires Mg(2+) as cofactor.

It localises to the cytoplasm. An essential GTPase which binds GTP, GDP and possibly (p)ppGpp with moderate affinity, with high nucleotide exchange rates and a fairly low GTP hydrolysis rate. Plays a role in control of the cell cycle, stress response, ribosome biogenesis and in those bacteria that undergo differentiation, in morphogenesis control. The protein is GTPase Obg of Hyphomonas neptunium (strain ATCC 15444).